The chain runs to 187 residues: Peptide deformylase (187 aa).

Fe cation is bound by residues Cys-107 and His-149. The active site involves Glu-150. His-153 lines the Fe cation pocket.

This sequence belongs to the polypeptide deformylase family. It depends on Fe(2+) as a cofactor.

It catalyses the reaction N-terminal N-formyl-L-methionyl-[peptide] + H2O = N-terminal L-methionyl-[peptide] + formate. Removes the formyl group from the N-terminal Met of newly synthesized proteins. Requires at least a dipeptide for an efficient rate of reaction. N-terminal L-methionine is a prerequisite for activity but the enzyme has broad specificity at other positions. This chain is Peptide deformylase, found in Microchaete diplosiphon (Fremyella diplosiphon).